Consider the following 423-residue polypeptide: Adenylosuccinate synthetase (423 aa).

GTP contacts are provided by residues 12 to 18 and 40 to 42; these read GDEGKGK and GHT. Asp-13 functions as the Proton acceptor in the catalytic mechanism. Mg(2+) is bound by residues Asp-13 and Gly-40. Residues 13–16, 38–41, Thr-129, Arg-143, Gln-221, Thr-236, and Arg-300 contribute to the IMP site; these read DEGK and NAGH. Residue His-41 is the Proton donor of the active site. 296–302 lines the substrate pocket; sequence AVTGRER. GTP is bound by residues Arg-302, 328 to 330, and 408 to 410; these read KSD and SVG.

This sequence belongs to the adenylosuccinate synthetase family. In terms of assembly, homodimer. It depends on Mg(2+) as a cofactor.

It is found in the cytoplasm. It carries out the reaction IMP + L-aspartate + GTP = N(6)-(1,2-dicarboxyethyl)-AMP + GDP + phosphate + 2 H(+). It participates in purine metabolism; AMP biosynthesis via de novo pathway; AMP from IMP: step 1/2. Functionally, plays an important role in the de novo pathway of purine nucleotide biosynthesis. Catalyzes the first committed step in the biosynthesis of AMP from IMP. The chain is Adenylosuccinate synthetase from Phocaeicola vulgatus (strain ATCC 8482 / DSM 1447 / JCM 5826 / CCUG 4940 / NBRC 14291 / NCTC 11154) (Bacteroides vulgatus).